The chain runs to 207 residues: Cytochrome c biogenesis ATP-binding export protein CcmA (207 aa).

Residues 4–207 (LEARELLCER…RISLTQTRAA (204 aa)) enclose the ABC transporter domain. Residue 36 to 43 (GSNGAGKT) coordinates ATP.

The protein belongs to the ABC transporter superfamily. CcmA exporter (TC 3.A.1.107) family. The complex is composed of two ATP-binding proteins (CcmA) and two transmembrane proteins (CcmB).

The protein localises to the cell inner membrane. The enzyme catalyses heme b(in) + ATP + H2O = heme b(out) + ADP + phosphate + H(+). Functionally, part of the ABC transporter complex CcmAB involved in the biogenesis of c-type cytochromes; once thought to export heme, this seems not to be the case, but its exact role is uncertain. Responsible for energy coupling to the transport system. This chain is Cytochrome c biogenesis ATP-binding export protein CcmA, found in Shigella sonnei (strain Ss046).